A 66-amino-acid chain; its full sequence is U1-theraphotoxin-Cg1a 2 (66 aa).

Residues 1-21 form the signal peptide; the sequence is MKTSALFVIFGLVLLFCNSFA. The propeptide occupies 22–29; that stretch reads AELEMTGR. Cystine bridges form between cysteine 31-cysteine 46, cysteine 38-cysteine 51, and cysteine 45-cysteine 58. Proline 63 carries the post-translational modification Proline amide.

This sequence belongs to the neurotoxin 10 (Hwtx-1) family. 46 (Jztx-7/10/12) subfamily. In terms of tissue distribution, expressed by the venom gland.

The protein resides in the secreted. In terms of biological role, probable ion channel inhibitor. The sequence is that of U1-theraphotoxin-Cg1a 2 from Chilobrachys guangxiensis (Chinese earth tiger tarantula).